The following is a 300-amino-acid chain: Ribosomal RNA small subunit methyltransferase H (300 aa).

Residues 38–40 (GGH), E55, I85, D102, and H109 contribute to the S-adenosyl-L-methionine site.

This sequence belongs to the methyltransferase superfamily. RsmH family.

The protein resides in the cytoplasm. It carries out the reaction cytidine(1402) in 16S rRNA + S-adenosyl-L-methionine = N(4)-methylcytidine(1402) in 16S rRNA + S-adenosyl-L-homocysteine + H(+). Specifically methylates the N4 position of cytidine in position 1402 (C1402) of 16S rRNA. The protein is Ribosomal RNA small subunit methyltransferase H of Brachyspira hyodysenteriae (strain ATCC 49526 / WA1).